The primary structure comprises 149 residues: Ribosomal RNA large subunit methyltransferase H (149 aa).

S-adenosyl-L-methionine is bound by residues L71, G98, and 117 to 122; that span reads LSKLTL.

This sequence belongs to the RNA methyltransferase RlmH family. As to quaternary structure, homodimer.

The protein resides in the cytoplasm. It carries out the reaction pseudouridine(1915) in 23S rRNA + S-adenosyl-L-methionine = N(3)-methylpseudouridine(1915) in 23S rRNA + S-adenosyl-L-homocysteine + H(+). Its function is as follows. Specifically methylates the pseudouridine at position 1915 (m3Psi1915) in 23S rRNA. The chain is Ribosomal RNA large subunit methyltransferase H from Campylobacter jejuni subsp. doylei (strain ATCC BAA-1458 / RM4099 / 269.97).